The following is a 184-amino-acid chain: dCTP deaminase (184 aa).

Position 107 to 112 (107 to 112 (KSTIAR)) interacts with dCTP. The active-site Proton donor/acceptor is E133. The dCTP site is built by Q152, Y166, and Q176.

This sequence belongs to the dCTP deaminase family. Homotrimer.

The catalysed reaction is dCTP + H2O + H(+) = dUTP + NH4(+). It functions in the pathway pyrimidine metabolism; dUMP biosynthesis; dUMP from dCTP (dUTP route): step 1/2. Catalyzes the deamination of dCTP to dUTP. This Roseiflexus castenholzii (strain DSM 13941 / HLO8) protein is dCTP deaminase.